Consider the following 166-residue polypeptide: Ureidoglycolate lyase (166 aa).

This sequence belongs to the ureidoglycolate lyase family. Homodimer. Ni(2+) serves as cofactor.

The catalysed reaction is (S)-ureidoglycolate = urea + glyoxylate. It participates in nitrogen metabolism; (S)-allantoin degradation. Its function is as follows. Catalyzes the catabolism of the allantoin degradation intermediate (S)-ureidoglycolate, generating urea and glyoxylate. Involved in the utilization of allantoin as nitrogen source. This is Ureidoglycolate lyase from Azotobacter vinelandii (strain DJ / ATCC BAA-1303).